The chain runs to 180 residues: Large ribosomal subunit protein uL6 (180 aa).

The protein belongs to the universal ribosomal protein uL6 family. Part of the 50S ribosomal subunit.

Its function is as follows. This protein binds to the 23S rRNA, and is important in its secondary structure. It is located near the subunit interface in the base of the L7/L12 stalk, and near the tRNA binding site of the peptidyltransferase center. In Thermodesulfovibrio yellowstonii (strain ATCC 51303 / DSM 11347 / YP87), this protein is Large ribosomal subunit protein uL6.